The primary structure comprises 103 residues: Large ribosomal subunit protein uL22c (103 aa).

The protein belongs to the universal ribosomal protein uL22 family. In terms of assembly, part of the 50S ribosomal subunit.

The protein resides in the plastid. It localises to the chloroplast. Functionally, this protein binds specifically to 23S rRNA. Its function is as follows. The globular domain of the protein is located near the polypeptide exit tunnel on the outside of the subunit, while an extended beta-hairpin is found that lines the wall of the exit tunnel in the center of the 70S ribosome. In Cyanidium caldarium (Red alga), this protein is Large ribosomal subunit protein uL22c (rpl22).